A 126-amino-acid chain; its full sequence is uncharacterized protein (126 aa).

An N-terminal signal peptide occupies residues 1 to 23 (MLKKLIMGFFLLILLGIAGVAVM).

This is an uncharacterized protein from Archaeoglobus fulgidus (strain ATCC 49558 / DSM 4304 / JCM 9628 / NBRC 100126 / VC-16).